The sequence spans 269 residues: S-adenosylmethionine decarboxylase proenzyme (269 aa).

S118 acts as the Schiff-base intermediate with substrate; via pyruvic acid in catalysis. S118 bears the Pyruvic acid (Ser); by autocatalysis mark. H123 functions as the Proton acceptor; for processing activity in the catalytic mechanism. C146 (proton donor; for catalytic activity) is an active-site residue.

This sequence belongs to the prokaryotic AdoMetDC family. Type 2 subfamily. In terms of assembly, heterooctamer of four alpha and four beta chains arranged as a tetramer of alpha/beta heterodimers. It depends on pyruvate as a cofactor. In terms of processing, is synthesized initially as an inactive proenzyme. Formation of the active enzyme involves a self-maturation process in which the active site pyruvoyl group is generated from an internal serine residue via an autocatalytic post-translational modification. Two non-identical subunits are generated from the proenzyme in this reaction, and the pyruvate is formed at the N-terminus of the alpha chain, which is derived from the carboxyl end of the proenzyme. The post-translation cleavage follows an unusual pathway, termed non-hydrolytic serinolysis, in which the side chain hydroxyl group of the serine supplies its oxygen atom to form the C-terminus of the beta chain, while the remainder of the serine residue undergoes an oxidative deamination to produce ammonia and the pyruvoyl group blocking the N-terminus of the alpha chain.

The enzyme catalyses S-adenosyl-L-methionine + H(+) = S-adenosyl 3-(methylsulfanyl)propylamine + CO2. Its pathway is amine and polyamine biosynthesis; S-adenosylmethioninamine biosynthesis; S-adenosylmethioninamine from S-adenosyl-L-methionine: step 1/1. Catalyzes the decarboxylation of S-adenosylmethionine to S-adenosylmethioninamine (dcAdoMet), the propylamine donor required for the synthesis of the polyamines spermine and spermidine from the diamine putrescine. This chain is S-adenosylmethionine decarboxylase proenzyme, found in Brevibacillus brevis (strain 47 / JCM 6285 / NBRC 100599).